The primary structure comprises 1035 residues: Cell-division control histidine kinase PdhS (1035 aa).

The tract at residues 1–613 (MSGSYPFIDI…HADGSEEPVD (613 aa)) is important for polar localization. The segment at 500–533 (QGLANTRAESETPVSETSSIEPVEPTPPVKTRSE) is disordered. Positions 614-1035 (AHLNAIAWRG…VFPPTRVLAD (422 aa)) are interaction with DivK. The region spanning 659–730 (HVEELKTILD…YLHGLSGNGV (72 aa)) is the PAS domain. A Histidine kinase domain is found at 802–1031 (RISHEIRTPL…VVEIVFPPTR (230 aa)). Histidine 805 is modified (phosphohistidine; by autocatalysis).

As to quaternary structure, interacts with DivK.

The protein resides in the cytoplasm. The enzyme catalyses ATP + protein L-histidine = ADP + protein N-phospho-L-histidine.. Functionally, functions as a polar differentiation marker. Essential protein that, by localizing in the old pole of dividing cells, controls cell division and maturation, probably through control of DivK phosphorylation status and cellular distribution, which in turn regulates CtrA, a transcriptional regulator of the minB operon. The asymmetrical localization of this protein is probably required for cells to enter a new division cycle. The chain is Cell-division control histidine kinase PdhS (pdhS) from Brucella ovis (strain ATCC 25840 / 63/290 / NCTC 10512).